The primary structure comprises 427 residues: Enolase (427 aa).

Q163 lines the (2R)-2-phosphoglycerate pocket. E205 serves as the catalytic Proton donor. D242, E285, and D312 together coordinate Mg(2+). Positions 337, 366, 367, and 388 each coordinate (2R)-2-phosphoglycerate. K337 (proton acceptor) is an active-site residue.

Belongs to the enolase family. The cofactor is Mg(2+).

It is found in the cytoplasm. The protein localises to the secreted. It localises to the cell surface. The enzyme catalyses (2R)-2-phosphoglycerate = phosphoenolpyruvate + H2O. Its pathway is carbohydrate degradation; glycolysis; pyruvate from D-glyceraldehyde 3-phosphate: step 4/5. Functionally, catalyzes the reversible conversion of 2-phosphoglycerate (2-PG) into phosphoenolpyruvate (PEP). It is essential for the degradation of carbohydrates via glycolysis. In Burkholderia mallei (strain NCTC 10247), this protein is Enolase.